Reading from the N-terminus, the 279-residue chain is Energy-coupling factor transporter ATP-binding protein EcfA1 (279 aa).

One can recognise an ABC transporter domain in the interval 5–240 (IELKKVTFNY…GDELLQLGLD (236 aa)). 40-47 (GHNGSGKS) contacts ATP.

Belongs to the ABC transporter superfamily. Energy-coupling factor EcfA family. In terms of assembly, forms a stable energy-coupling factor (ECF) transporter complex composed of 2 membrane-embedded substrate-binding proteins (S component), 2 ATP-binding proteins (A component) and 2 transmembrane proteins (T component).

The protein localises to the cell membrane. In terms of biological role, ATP-binding (A) component of a common energy-coupling factor (ECF) ABC-transporter complex. Unlike classic ABC transporters this ECF transporter provides the energy necessary to transport a number of different substrates. The chain is Energy-coupling factor transporter ATP-binding protein EcfA1 from Streptococcus pyogenes serotype M5 (strain Manfredo).